The primary structure comprises 153 residues: Aspartate carbamoyltransferase regulatory chain (153 aa).

Zn(2+)-binding residues include C109, C114, C138, and C141.

The protein belongs to the PyrI family. As to quaternary structure, contains catalytic and regulatory chains. The cofactor is Zn(2+).

Its function is as follows. Involved in allosteric regulation of aspartate carbamoyltransferase. This is Aspartate carbamoyltransferase regulatory chain from Salmonella arizonae (strain ATCC BAA-731 / CDC346-86 / RSK2980).